Reading from the N-terminus, the 117-residue chain is MSNIIKALEEEQMKSGLPKFAPGDTVVVQVKVKEGDRERLQAFEGVVIAIRNRGLHSAFTVRKISNGEGVERTFQTHSPIVDSIEVKRRGAVRRAKLYYLRERSGKSARIKEKLAKK.

The protein belongs to the bacterial ribosomal protein bL19 family.

Functionally, this protein is located at the 30S-50S ribosomal subunit interface and may play a role in the structure and function of the aminoacyl-tRNA binding site. This is Large ribosomal subunit protein bL19 from Vibrio parahaemolyticus serotype O3:K6 (strain RIMD 2210633).